Reading from the N-terminus, the 562-residue chain is Formate--tetrahydrofolate ligase (562 aa).

71 to 78 (TPAGEGKS) contacts ATP.

Belongs to the formate--tetrahydrofolate ligase family.

It catalyses the reaction (6S)-5,6,7,8-tetrahydrofolate + formate + ATP = (6R)-10-formyltetrahydrofolate + ADP + phosphate. Its pathway is one-carbon metabolism; tetrahydrofolate interconversion. This is Formate--tetrahydrofolate ligase from Bacillus cereus (strain ATCC 14579 / DSM 31 / CCUG 7414 / JCM 2152 / NBRC 15305 / NCIMB 9373 / NCTC 2599 / NRRL B-3711).